The sequence spans 489 residues: Blue-light-activated histidine kinase (489 aa).

The PAS domain maps to 19 to 93; the sequence is ATDPFRAAVE…AIKSAIAAEK (75 aa). Cys-69 carries the post-translational modification S-4a-FMN cysteine. PAC domains are found at residues 93-147 and 232-281; these read KPID…ELEK and YSIE…NKAL. Residues 259 to 341 are HWE histidine kinase domain; sequence NPLVLGIVQD…LLKENWAGAT (83 aa). The residue at position 288 (His-288) is a Phosphohistidine; by autocatalysis.

Post-translationally, FMN binds covalently to cysteine after exposure to blue light and this bond is spontaneously broken in the dark.

It carries out the reaction ATP + protein L-histidine = ADP + protein N-phospho-L-histidine.. Functionally, photosensitive kinase that is involved in increased bacterial virulence upon exposure to light. Once ejected from an infected animal host, sunlight acts as an environmental signal that increases the virulence of the bacterium, preparing it for infection of the next host. This photoreceptor protein is directly related to the bacterium's survival and replication within host macrophages, as it is required for optimal replication of bacteria inside macrophages. This Brucella abortus (strain 2308) protein is Blue-light-activated histidine kinase.